We begin with the raw amino-acid sequence, 456 residues long: Acetylcholine receptor subunit alpha (456 aa).

Positions 1–20 (MNYFILILPILPYLYGPAVC) are cleaved as a signal peptide. Residues 21–230 (SEDETRLVKT…ITYHFLLLRL (210 aa)) lie on the Extracellular side of the membrane. Cystine bridges form between Cys-148-Cys-162 and Cys-212-Cys-213. Asn-161 carries an N-linked (GlcNAc...) asparagine glycan. A run of 3 helical transmembrane segments spans residues 231–255 (PLYFIVNVIIPCMLFSFLTGLVFYL), 263–281 (MTLSISVLLSLTVFLLVIV), and 297–316 (YMLFTMIFVIASIIITVIVI). Residues 317-428 (NTHHRSPSTH…WKFVAMVLDH (112 aa)) lie on the Cytoplasmic side of the membrane. Residues 429–447 (ILLCVFMAVCIIGTLGVFA) traverse the membrane as a helical segment.

It belongs to the ligand-gated ion channel (TC 1.A.9) family. Acetylcholine receptor (TC 1.A.9.1) subfamily. Alpha-1/CHRNA1 sub-subfamily. In terms of assembly, one of the alpha chains that assemble within the acetylcholine receptor, a pentamer of two alpha chains, a beta, a delta, and a gamma or epsilon chains.

The protein resides in the postsynaptic cell membrane. It localises to the cell membrane. The enzyme catalyses K(+)(in) = K(+)(out). It carries out the reaction Na(+)(in) = Na(+)(out). In terms of biological role, upon acetylcholine binding, the AChR responds by an extensive change in conformation that affects all subunits and leads to opening of an ion-conducting channel across the plasma membrane. This is Acetylcholine receptor subunit alpha (chrna1) from Danio rerio (Zebrafish).